The sequence spans 159 residues: 17 kDa surface antigen (159 aa).

Residues 1 to 19 (MKLLSKIMIIALAASMLQA) form the signal peptide. Cys-20 is lipidated: N-palmitoyl cysteine. Cys-20 is lipidated: S-diacylglycerol cysteine.

This sequence belongs to the rickettsiale 17 kDa surface antigen family.

It localises to the cell outer membrane. In Rickettsia felis (strain ATCC VR-1525 / URRWXCal2) (Rickettsia azadi), this protein is 17 kDa surface antigen (omp).